A 238-amino-acid chain; its full sequence is Protein TIFY 3A (238 aa).

A Tify 1 domain is found at 39–74 (EPDASTQLTIIFGGSCRVFNGVPAQKVQEIIRIAFA). A Jas 1 motif is present at residues 101–120 (PIARRRSLQRFLEKRRDRST). The Nuclear localization signal 1 signature appears at 103 to 110 (ARRRSLQR). In terms of domain architecture, Tify 2 spans 125–160 (SMILPSQLTIIFGGSFSVFDGIPAEKVQEILHIAAA). A Jas 2 motif is present at residues 197–222 (PIARRRSLQRFFEKRRHRFVHTKPYS). A Nuclear localization signal 2 motif is present at residues 199–206 (ARRRSLQR). The interval 219 to 238 (KPYSATTSEADKNETSPIVT) is disordered.

The protein belongs to the TIFY/JAZ family. As to quaternary structure, interacts with MYC2, MYB21, MYB24, AFPH2/NINJA, TIFY10A/JAZ1, TIFY10B/JAZ2, TIFY6B/JAZ3, TIFY6A/JAZ4, TIFY7/JAZ9 and TIFY9/JAZ10. Post-translationally, ubiquitinated. Targeted for degradation by the SCF(COI1) E3 ubiquitin ligase-proteasome pathway during jasmonate signaling.

The protein localises to the nucleus. Its function is as follows. Repressor of jasmonate (JA) responses. Targets MYC2, MYC3 and MYC4 that are JA-dependent transcription activators. This Arabidopsis thaliana (Mouse-ear cress) protein is Protein TIFY 3A (TIFY3A).